The following is a 453-amino-acid chain: Wall-associated protein (453 aa).

A signal peptide spans 1–29 (MKMKRKLLSLVSVLTILLGAFWVTKIVKA). Residues 331–403 (GRASSRVKRQ…TASQTNVPTT (73 aa)) form a disordered region. The segment covering 342–403 (ETTTVTETTT…TASQTNVPTT (62 aa)) has biased composition (low complexity). Positions 422–426 (LPSTG) match the LPXTG sorting signal motif. T425 carries the post-translational modification Pentaglycyl murein peptidoglycan amidated threonine. The propeptide at 426–453 (GEQAGLLLTTVGLVIVAVAGVYFYRTRR) is removed by sortase.

The protein localises to the secreted. Its subcellular location is the cell wall. The sequence is that of Wall-associated protein (wapA) from Streptococcus mutans serotype c (strain ATCC 700610 / UA159).